Here is a 256-residue protein sequence, read N- to C-terminus: Imidazole glycerol phosphate synthase subunit HisF (256 aa).

Active-site residues include Asp12 and Asp131.

The protein belongs to the HisA/HisF family. As to quaternary structure, heterodimer of HisH and HisF.

Its subcellular location is the cytoplasm. It catalyses the reaction 5-[(5-phospho-1-deoxy-D-ribulos-1-ylimino)methylamino]-1-(5-phospho-beta-D-ribosyl)imidazole-4-carboxamide + L-glutamine = D-erythro-1-(imidazol-4-yl)glycerol 3-phosphate + 5-amino-1-(5-phospho-beta-D-ribosyl)imidazole-4-carboxamide + L-glutamate + H(+). It functions in the pathway amino-acid biosynthesis; L-histidine biosynthesis; L-histidine from 5-phospho-alpha-D-ribose 1-diphosphate: step 5/9. IGPS catalyzes the conversion of PRFAR and glutamine to IGP, AICAR and glutamate. The HisF subunit catalyzes the cyclization activity that produces IGP and AICAR from PRFAR using the ammonia provided by the HisH subunit. In Beutenbergia cavernae (strain ATCC BAA-8 / DSM 12333 / CCUG 43141 / JCM 11478 / NBRC 16432 / NCIMB 13614 / HKI 0122), this protein is Imidazole glycerol phosphate synthase subunit HisF.